The following is a 354-amino-acid chain: Guanine nucleotide-binding protein G(q) subunit alpha (354 aa).

2 S-palmitoyl cysteine lipidation sites follow: Cys-3 and Cys-4. A G-alpha domain is found at 32-354 (RELKLLLLGT…QLNLKEYNLV (323 aa)). The interval 35–48 (KLLLLGTGESGKST) is G1 motif. GTP contacts are provided by residues 40–47 (GTGESGKS), 174–180 (LRVRVPT), 199–203 (DVGGQ), 269–272 (NKKD), and Ala-326. Positions 47 and 180 each coordinate Mg(2+). A G2 motif region spans residues 172 to 180 (DILRVRVPT). A G3 motif region spans residues 195 to 204 (FRMVDVGGQR). The tract at residues 265–272 (ILFLNKKD) is G4 motif. The interval 324–329 (TCATDT) is G5 motif.

The protein belongs to the G-alpha family. G(q) subfamily. In terms of assembly, g proteins are composed of 3 units; alpha, beta and gamma. The alpha chain contains the guanine nucleotide binding site. In terms of tissue distribution, a high concentration was found in the retinal light-sensitive outer segment.

In terms of biological role, guanine nucleotide-binding proteins (G proteins) are involved as modulators or transducers in various transmembrane signaling systems. The G(q) alpha subunit is involved in the light-dependent activation of phospholipase C. The protein is Guanine nucleotide-binding protein G(q) subunit alpha of Loligo forbesii (Veined squid).